A 367-amino-acid chain; its full sequence is Mitogen-activated protein kinase 12 (367 aa).

Residues 27–311 (YQDLQPVGSG…AAEALTHPYF (285 aa)) form the Protein kinase domain. Residues 33 to 41 (VGSGAYGAV) and lysine 56 contribute to the ATP site. The active-site Proton acceptor is aspartate 153. Threonine 183 is subject to Phosphothreonine. A TXY motif is present at residues 183–185 (TGY). The residue at position 185 (tyrosine 185) is a Phosphotyrosine.

The protein belongs to the protein kinase superfamily. CMGC Ser/Thr protein kinase family. MAP kinase subfamily. As to quaternary structure, monomer. Interacts with the PDZ domain of the syntrophin SNTA1. Interacts with SH3BP5, LIN7C, SCRIB and SYNJ2BP. Interacts with PTPN4; this interaction induces the activation of PTPN4 phosphatase activity. The cofactor is Mg(2+). In terms of processing, dually phosphorylated on Thr-183 and Tyr-185 by MAP2K3/MKK3 and MAP2K6/MKK6, which activates the enzyme. Ubiquitinated. Ubiquitination leads to degradation by the proteasome pathway. As to expression, highly expressed in skeletal muscle. Also expressed in the heart, particularly in cardiac myocytes, lung, thymus and testes.

The protein localises to the cytoplasm. The protein resides in the nucleus. It localises to the mitochondrion. The enzyme catalyses L-seryl-[protein] + ATP = O-phospho-L-seryl-[protein] + ADP + H(+). It carries out the reaction L-threonyl-[protein] + ATP = O-phospho-L-threonyl-[protein] + ADP + H(+). Its activity is regulated as follows. Activated by phosphorylation on threonine and tyrosine. MAP2K3/MKK3 and MAP2K6/MKK6 are both essential for the activation of MAPK12 induced by environmental stress, whereas MAP2K6/MKK6 is the major MAPK12 activator in response to TNF-alpha. Functionally, serine/threonine kinase which acts as an essential component of the MAP kinase signal transduction pathway. MAPK12 is one of the four p38 MAPKs which play an important role in the cascades of cellular responses evoked by extracellular stimuli such as pro-inflammatory cytokines or physical stress leading to direct activation of transcription factors such as ELK1 and ATF2. Accordingly, p38 MAPKs phosphorylate a broad range of proteins and it has been estimated that they may have approximately 200 to 300 substrates each. Some of the targets are downstream kinases such as MAPKAPK2, which are activated through phosphorylation and further phosphorylate additional targets. Plays a role in myoblast differentiation and also in the down-regulation of cyclin D1 in response to hypoxia in adrenal cells suggesting MAPK12 may inhibit cell proliferation while promoting differentiation. Phosphorylates DLG1. Following osmotic shock, MAPK12 in the cell nucleus increases its association with nuclear DLG1, thereby causing dissociation of DLG1-SFPQ complexes. This function is independent of its catalytic activity and could affect mRNA processing and/or gene transcription to aid cell adaptation to osmolarity changes in the environment. Regulates UV-induced checkpoint signaling and repair of UV-induced DNA damage and G2 arrest after gamma-radiation exposure. MAPK12 is involved in the regulation of SLC2A1 expression and basal glucose uptake in L6 myotubes; and negatively regulates SLC2A4 expression and contraction-mediated glucose uptake in adult skeletal muscle. C-Jun (JUN) phosphorylation is stimulated by MAPK14 and inhibited by MAPK12, leading to a distinct AP-1 regulation. MAPK12 is required for the normal kinetochore localization of PLK1, prevents chromosomal instability and supports mitotic cell viability. MAPK12-signaling is also positively regulating the expansion of transient amplifying myogenic precursor cells during muscle growth and regeneration. The polypeptide is Mitogen-activated protein kinase 12 (Mapk12) (Mus musculus (Mouse)).